Here is a 355-residue protein sequence, read N- to C-terminus: MPLVAHTDLPTFQRLREEGQDVLSVERAARQDIREMHIGLLNMMPDAALEATERQFFRLVGGANPIVQFHMHPFTIEGLPRGDQAAEHIARYYESFDRIREEGLDGLIVSGANVTQPHLQQEAFWQPLTEVFDWARSNVTSILCSCLATHALFQYSYGVERTHLGFKRWGVYSHRVVEPLHPLVADINTRFDVPHSRYNEIFREDMEAAGLRVLVESEEAGVHLAVSPDLFRVIYFQAHPEYDTVSLLKEYKREILRYFSGEREDYPPFPEHYFSLEVGAALNDYGQALRSARRAGRAPPPFPEEFVLRHLDNTWRDTAKAVFNNWLGKIYQITDQDRRKPFMAHIDPDNPLGLA.

Residue Cys146 is the Acyl-thioester intermediate of the active site. Lys167 and Ser196 together coordinate substrate. His239 acts as the Proton acceptor in catalysis. Glu241 is a catalytic residue. Arg253 is a substrate binding site.

It belongs to the MetA family.

The protein resides in the cytoplasm. It carries out the reaction L-homoserine + succinyl-CoA = O-succinyl-L-homoserine + CoA. The protein operates within amino-acid biosynthesis; L-methionine biosynthesis via de novo pathway; O-succinyl-L-homoserine from L-homoserine: step 1/1. Its function is as follows. Transfers a succinyl group from succinyl-CoA to L-homoserine, forming succinyl-L-homoserine. This chain is Homoserine O-succinyltransferase, found in Methylococcus capsulatus (strain ATCC 33009 / NCIMB 11132 / Bath).